Reading from the N-terminus, the 277-residue chain is Large ribosomal subunit protein uL2 (277 aa).

Disordered stretches follow at residues 37–59 and 221–265; these read KNSTGGRNHNGHITTRHRGGGHK and RGTA…KRTD. The segment covering 50–59 has biased composition (basic residues); that stretch reads TTRHRGGGHK. Over residues 229-241 the composition is skewed to basic and acidic residues; sequence DHPHGGGEGRTGE.

It belongs to the universal ribosomal protein uL2 family. As to quaternary structure, part of the 50S ribosomal subunit. Forms a bridge to the 30S subunit in the 70S ribosome.

Functionally, one of the primary rRNA binding proteins. Required for association of the 30S and 50S subunits to form the 70S ribosome, for tRNA binding and peptide bond formation. It has been suggested to have peptidyltransferase activity; this is somewhat controversial. Makes several contacts with the 16S rRNA in the 70S ribosome. The chain is Large ribosomal subunit protein uL2 from Chromobacterium violaceum (strain ATCC 12472 / DSM 30191 / JCM 1249 / CCUG 213 / NBRC 12614 / NCIMB 9131 / NCTC 9757 / MK).